A 1078-amino-acid chain; its full sequence is Nonribosomal peptide synthetase aneB (1078 aa).

The adenylation stretch occupies residues 20 to 417 (FQQNVLDRPD…HGRKDTQVKI (398 aa)). A Carrier domain is found at 559–635 (MPTTPLERQM…TLCQHVSVRP (77 aa)). Residue serine 596 is modified to O-(pantetheine 4'-phosphoryl)serine. The segment at 699 to 1013 (NYTLRLDVKL…HEMGYYGPVT (315 aa)) is condensation.

Belongs to the NRP synthetase family.

The catalysed reaction is holo-[peptidyl-carrier protein] + L-proline + ATP = L-prolyl-[peptidyl-carrier protein] + AMP + diphosphate. Its pathway is secondary metabolite biosynthesis. In terms of biological role, nonribosomal peptide synthetase; part of the gene cluster that mediates the biosynthesis of aculenes, a unique type of norsesquiterpenes that contain a nordaucane skeleton linked to an L-proline moiety and are of mixed biosynthetic origin. The pathway begins with the synthesis of dauca-4,7-diene by the terpene cyclase aneC using farnesyl pyrophosphate (FPP) as substrate. The cytochrome P450 monooxygenase aneF then performs the initial oxidation at C-12 of dauca-4,7-diene to yield asperaculane D. Asperaculane D is substrate of the cytochrome P450 monooxygenase aneD for C-10 hydroxylation to yield asperaculane E. The cytochrome P450 monooxygenase aneG then converts asperaculane E into aculene D via C-2 oxidation. The monomodular nonribosomal peptide synthase aneB adenylates L-proline and the thiohydrolase aneE transfers this activated L-proline derivative to aculenes D and C to produce respectively aculenes B and A. The dioxygenase aneA converts aculene D into aculene C, and aculene B into aculene A by introducing the 5,6-alkene moiety. Asperculanes A, B, C and F, as well as 14-prolyl asperculane C, might be shunt products of the pathway. The sequence is that of Nonribosomal peptide synthetase aneB from Aspergillus aculeatus (strain ATCC 16872 / CBS 172.66 / WB 5094).